The following is an 88-amino-acid chain: Small ribosomal subunit protein bS18A (88 aa).

It belongs to the bacterial ribosomal protein bS18 family. Part of the 30S ribosomal subunit. Forms a tight heterodimer with protein bS6.

Functionally, binds as a heterodimer with protein bS6 to the central domain of the 16S rRNA, where it helps stabilize the platform of the 30S subunit. The sequence is that of Small ribosomal subunit protein bS18A from Mycolicibacterium gilvum (strain PYR-GCK) (Mycobacterium gilvum (strain PYR-GCK)).